The primary structure comprises 120 residues: MITKPIKNVARKKRHAHVRRTITGTPERPRLNVFRSSKHIYAQLIDDVNGVTVAAASSLDKELKLENGGNVEAAKKVGELVAKRALEKGYKTIVFDRGGYVYHGRVASLADAAREAGLQF.

This sequence belongs to the universal ribosomal protein uL18 family. Part of the 50S ribosomal subunit; part of the 5S rRNA/L5/L18/L25 subcomplex. Contacts the 5S and 23S rRNAs.

This is one of the proteins that bind and probably mediate the attachment of the 5S RNA into the large ribosomal subunit, where it forms part of the central protuberance. The sequence is that of Large ribosomal subunit protein uL18 from Halalkalibacterium halodurans (strain ATCC BAA-125 / DSM 18197 / FERM 7344 / JCM 9153 / C-125) (Bacillus halodurans).